We begin with the raw amino-acid sequence, 298 residues long: ADP/ATP translocase 3 (298 aa).

At Met1 the chain carries N-acetylmethionine. The Mitochondrial intermembrane portion of the chain corresponds to 1 to 7; that stretch reads MTEQAIS. Thr2 is subject to N-acetylthreonine; in ADP/ATP translocase 3, N-terminally processed. A Solcar 1 repeat occupies 6-98; sequence ISFAKDFLAG…FAFKDKYKQI (93 aa). Residues 8–37 traverse the membrane as a helical segment; sequence FAKDFLAGGIAAAISKTAVAPIERVKLLLQ. Over 38–74 the chain is Mitochondrial matrix; it reads VQHASKQIAADKQYKGIVDCIVRIPKEQGVLSFWRGN. Residue Lys52 is modified to N6,N6,N6-trimethyllysine. The helical transmembrane segment at 75–99 threads the bilayer; the sequence is LANVIRYFPTQALNFAFKDKYKQIF. Positions 80 and 92 each coordinate ADP. Over 100–109 the chain is Mitochondrial intermembrane; the sequence is LGGVDKRTQF. Residue Lys105 is modified to N6-acetyllysine. The chain crosses the membrane as a helical span at residues 110–130; sequence WRYFAGNLASGGAAGATSLCF. 2 Solcar repeats span residues 111–201 and 212–297; these read RYFA…AKGM and VSWM…LKKV. At 131-178 the chain is on the mitochondrial matrix side; sequence VYPLDFARTRLAADVGKSGSEREFRGLGDCLVKITKSDGIRGLYQGFN. Residues 179-199 form a helical membrane-spanning segment; the sequence is VSVQGIIIYRAAYFGIYDTAK. Residues 200–210 lie on the Mitochondrial intermembrane side of the membrane; it reads GMLPDPKNTHI. The chain crosses the membrane as a helical span at residues 211–231; sequence VVSWMIAQTVTAVAGVVSYPF. Residues 232–273 are Mitochondrial matrix-facing; it reads DTVRRRMMMQSGRKGADIMYKGTVDCWRKILKDEGGKAFFKG. Arg235 contacts ADP. The tract at residues 235 to 240 is important for transport activity; it reads RRRMMM. The Nucleotide carrier signature motif motif lies at 235 to 240; sequence RRRMMM. Lys268 bears the N6-acetyllysine mark. Residues 274–291 form a helical membrane-spanning segment; sequence AWSNVLRGMGGAFVLVLY. Residues 292–298 lie on the Mitochondrial intermembrane side of the membrane; it reads DELKKVI.

This sequence belongs to the mitochondrial carrier (TC 2.A.29) family. As to quaternary structure, monomer. Found in a complex with ARL2, ARL2BP and SLC25A6/ANT3. Trimethylated by ANTKMT at Lys-52.

Its subcellular location is the mitochondrion inner membrane. The protein localises to the membrane. The catalysed reaction is ADP(in) + ATP(out) = ADP(out) + ATP(in). The enzyme catalyses H(+)(in) = H(+)(out). With respect to regulation, the matrix-open state (m-state) is inhibited by the membrane-permeable bongkrekic acid (BKA). The cytoplasmic-open state (c-state) is inhibited by the membrane-impermeable toxic inhibitor carboxyatractyloside (CATR). Proton transporter activity is inhibited by ADP:ATP antiporter activity. Functionally, ADP:ATP antiporter that mediates import of ADP into the mitochondrial matrix for ATP synthesis, and export of ATP out to fuel the cell. Cycles between the cytoplasmic-open state (c-state) and the matrix-open state (m-state): operates by the alternating access mechanism with a single substrate-binding site intermittently exposed to either the cytosolic (c-state) or matrix (m-state) side of the inner mitochondrial membrane. In addition to its ADP:ATP antiporter activity, also involved in mitochondrial uncoupling and mitochondrial permeability transition pore (mPTP) activity. Plays a role in mitochondrial uncoupling by acting as a proton transporter: proton transport uncouples the proton flows via the electron transport chain and ATP synthase to reduce the efficiency of ATP production and cause mitochondrial thermogenesis. Proton transporter activity is inhibited by ADP:ATP antiporter activity, suggesting that SLC25A6/ANT3 acts as a master regulator of mitochondrial energy output by maintaining a delicate balance between ATP production (ADP:ATP antiporter activity) and thermogenesis (proton transporter activity). Proton transporter activity requires free fatty acids as cofactor, but does not transport it. Also plays a key role in mPTP opening, a non-specific pore that enables free passage of the mitochondrial membranes to solutes of up to 1.5 kDa, and which contributes to cell death. It is however unclear if SLC25A6/ANT3 constitutes a pore-forming component of mPTP or regulates it. This Bos taurus (Bovine) protein is ADP/ATP translocase 3.